A 148-amino-acid chain; its full sequence is Lysozyme-like protein 2 (148 aa).

The first 19 residues, 1-19 (MKAAGILTLIGCLVTGAES), serve as a signal peptide directing secretion. In terms of domain architecture, C-type lysozyme spans 20–148 (KIYTRCKLAK…SDWKKDCEVS (129 aa)). 4 cysteine pairs are disulfide-bonded: cysteine 25/cysteine 145, cysteine 49/cysteine 133, cysteine 83/cysteine 98, and cysteine 94/cysteine 112. Glutamate 54 is an active-site residue. N-linked (GlcNAc...) asparagine glycosylation occurs at asparagine 58. The active site involves aspartate 71.

Belongs to the glycosyl hydrolase 22 family. As to quaternary structure, monomer. Expressed in testis, epididymis and placenta.

It is found in the secreted. The catalysed reaction is Hydrolysis of (1-&gt;4)-beta-linkages between N-acetylmuramic acid and N-acetyl-D-glucosamine residues in a peptidoglycan and between N-acetyl-D-glucosamine residues in chitodextrins.. The polypeptide is Lysozyme-like protein 2 (LYZL2) (Homo sapiens (Human)).